The following is a 390-amino-acid chain: Galactokinase (390 aa).

Residue 33–36 (EHTD) participates in substrate binding. ATP contacts are provided by residues S67 and 124–130 (GSGLSSS). Mg(2+) is bound by residues S130 and E162. Catalysis depends on D174, which acts as the Proton acceptor. Position 224 (Y224) interacts with substrate.

Belongs to the GHMP kinase family. GalK subfamily.

It is found in the cytoplasm. The enzyme catalyses alpha-D-galactose + ATP = alpha-D-galactose 1-phosphate + ADP + H(+). It functions in the pathway carbohydrate metabolism; galactose metabolism. Its function is as follows. Catalyzes the transfer of the gamma-phosphate of ATP to D-galactose to form alpha-D-galactose-1-phosphate (Gal-1-P). The sequence is that of Galactokinase from Streptococcus suis (strain 05ZYH33).